A 156-amino-acid chain; its full sequence is Small ribosomal subunit protein uS7A/uS7B (156 aa).

It belongs to the universal ribosomal protein uS7 family. As to quaternary structure, part of the 30S ribosomal subunit. Contacts proteins S9 and S11.

Its function is as follows. One of the primary rRNA binding proteins, it binds directly to 16S rRNA where it nucleates assembly of the head domain of the 30S subunit. Is located at the subunit interface close to the decoding center, probably blocks exit of the E-site tRNA. The protein is Small ribosomal subunit protein uS7A/uS7B of Bartonella bacilliformis (strain ATCC 35685 / KC583 / Herrer 020/F12,63).